Here is a 1059-residue protein sequence, read N- to C-terminus: Protein cappuccino (1059 aa).

2 stretches are compositionally biased toward polar residues: residues 62–80 (AAVT…NESG) and 90–123 (ATTS…SAAS). Disordered stretches follow at residues 62–146 (AAVT…GTPT) and 448–647 (QTES…TAPP). The segment covering 133–142 (LPLPPPPPGF) has biased composition (pro residues). A compositionally biased stretch (basic and acidic residues) spans 468–481 (SDNESAKEDGEKPH). Residues 480–560 (PHAVAPPPPP…PPPPMSASPS (81 aa)) enclose the FH1 domain. Residues 483 to 541 (VAPPPPPPPPPLHAFVAPPPPPPPPPPPPPPLANYGAPPPPPPPPPGSGSAPPPPPPAP) are compositionally biased toward pro residues. An FH2 domain is found at 585–1032 (RKSAVNPPKP…KKSKQAQIES (448 aa)). Positions 620–629 (TDSTENSGSS) are enriched in polar residues. The segment at 1049–1059 (KERMLMRRSKN) is important for interaction with spir.

This sequence belongs to the formin homology family. Cappuccino subfamily. As to quaternary structure, interacts with wash. Interacts with spir.

It localises to the cytoplasm. Its subcellular location is the cytoskeleton. The protein localises to the cytosol. The protein resides in the membrane. It is found in the cytoplasmic vesicle membrane. In terms of biological role, acts as an actin nucleation factor and promotes assembly of actin filaments together with spir. May play a role in intracellular vesicle transport along actin fibers, providing a novel link between actin cytoskeleton dynamics and intracellular transport. This chain is Protein cappuccino (capu), found in Drosophila melanogaster (Fruit fly).